Reading from the N-terminus, the 102-residue chain is Small ribosomal subunit protein uS10 (102 aa).

Belongs to the universal ribosomal protein uS10 family. As to quaternary structure, part of the 30S ribosomal subunit.

In terms of biological role, involved in the binding of tRNA to the ribosomes. The chain is Small ribosomal subunit protein uS10 from Nitrosospira multiformis (strain ATCC 25196 / NCIMB 11849 / C 71).